Here is a 667-residue protein sequence, read N- to C-terminus: Smc-like protein Sph2 (667 aa).

Coiled-coil stretches lie at residues 153 to 295 and 355 to 517; these read GSIQ…SLAT and GRLD…AITA.

The protein belongs to the Sph1/Sph2 family.

The protein localises to the cytoplasm. May play a role in replication. The polypeptide is Smc-like protein Sph2 (sph2) (Halobacterium salinarum (strain ATCC 29341 / DSM 671 / R1)).